Here is a 115-residue protein sequence, read N- to C-terminus: UPF0738 protein SE_0694 (115 aa).

The protein belongs to the UPF0738 family.

The polypeptide is UPF0738 protein SE_0694 (Staphylococcus epidermidis (strain ATCC 12228 / FDA PCI 1200)).